The sequence spans 371 residues: DNA repair and recombination protein rti1 (371 aa).

The tract at residues 346-371 (IDHNRSMPIRRPSLTSNNSANTFSTK) is disordered. Residues 358 to 371 (SLTSNNSANTFSTK) are compositionally biased toward polar residues.

It belongs to the RAD52 family. In terms of assembly, interacts with rph51 and rph54.

Its function is as follows. Active in the repair of DNA damage and in mating-type switching. Probably involved in the repair of DNA double-strands breaks. Has a role in promoting S phase completion. The polypeptide is DNA repair and recombination protein rti1 (rti1) (Schizosaccharomyces pombe (strain 972 / ATCC 24843) (Fission yeast)).